A 1201-amino-acid chain; its full sequence is Potassium/sodium hyperpolarization-activated cyclic nucleotide-gated channel 4 (1201 aa).

Topologically, residues 1 to 263 are cytoplasmic; the sequence is MDKLPPSMRK…IIHPYSDFRF (263 aa). Residues 24 to 183 are disordered; it reads WIMDEEEDGE…PASASCEQPS (160 aa). A compositionally biased stretch (acidic residues) spans 26–36; that stretch reads MDEEEDGEEEG. Over residues 105 to 118 the composition is skewed to gly residues; sequence SRGGGSGGAGGGSS. Basic and acidic residues predominate over residues 121 to 132; the sequence is HLHDSAEERRLI. A Phosphoserine modification is found at serine 139. The span at 164-174 shows a compositional bias: pro residues; the sequence is ASPPPQQPPQP. The tract at residues 209 to 260 is involved in subunit assembly; the sequence is GQSGFMQRQFGAMLQPGVNKFSLRMFGSQKAVEREQERVKSAGFWIIHPYSD. The chain crosses the membrane as a helical span at residues 264–286; the sequence is YWDLTMLLLMVGNLIIIPVGITF. Over 287–293 the chain is Extracellular; it reads FKDENTT. The chain crosses the membrane as a helical span at residues 294–314; sequence PWIVFNVVSDTFFLIDLVLNF. The Cytoplasmic segment spans residues 315–336; the sequence is RTGIVVEDNTEIILDPQRIKMK. Residues 337–359 traverse the membrane as a helical segment; that stretch reads YLKSWFVVDFISSIPVDYIFLIV. At 360–378 the chain is on the extracellular side; the sequence is ETRIDSEVYKTARALRIVR. A helical; Voltage-sensor membrane pass occupies residues 379–399; sequence FTKILSLLRLLRLSRLIRYIH. The Cytoplasmic segment spans residues 400-413; it reads QWEEIFHMTYDLAS. Residues 414 to 436 traverse the membrane as a helical segment; the sequence is AVVRIVNLIGMMLLLCHWDGCLQ. Residues 437 to 464 are Extracellular-facing; sequence FLVPMLQDFPHDCWVSINGMVNNSWGKQ. An N-linked (GlcNAc...) asparagine glycan is attached at asparagine 458. An intramembrane region (pore-forming) is located at residues 465–486; it reads YSYALFKAMSHMLCIGYGRQAP. Residues 487 to 491 are Extracellular-facing; sequence VGMSD. A helical membrane pass occupies residues 492 to 517; sequence VWLTMLSMIVGATCYAMFIGHATALI. Topologically, residues 518-1201 are cytoplasmic; sequence QSLDSSRRQY…PVRSKLPSNL (684 aa). Residues tyrosine 559, lysine 562, phenylalanine 564, and glutamate 566 each coordinate 3',5'-cyclic GMP. 3',5'-cyclic AMP contacts are provided by glycine 659, glutamate 660, cysteine 662, arginine 669, threonine 670, valine 673, and arginine 710. Disordered regions lie at residues 804–902 and 914–1201; these read AIFR…TAAA and ALGG…PSNL. Composition is skewed to low complexity over residues 831–856 and 866–880; these read SLIPSALGSASPASSPSQVDTPSSSS and SAPPGLSPLLPSSSS. The segment covering 881 to 894 has biased composition (pro residues); the sequence is SPPPGACGSPPAPT. 2 stretches are compositionally biased toward low complexity: residues 915-939 and 967-995; these read LGGSLSSSDSPLLTPLQPGARSPQA and RSPSSSPGQLGQPPGELSLGLAAGPSSTP. Positions 1029-1042 are enriched in pro residues; that stretch reads GHSPGPPRTFPSAP. Low complexity predominate over residues 1045 to 1056; the sequence is ASGSHGSLLLPP. Serine 1105 and serine 1108 each carry phosphoserine. The segment covering 1122 to 1134 has biased composition (gly residues); the sequence is AGGGSGSSGGLGP.

This sequence belongs to the potassium channel HCN family. As to quaternary structure, homotetramer. The potassium channel is composed of a homo- or heterotetrameric complex of pore-forming subunits. Interacts with PEX5L with a 4:4 HCN4:PEX5L stoichiometry; reduces the effects of cAMP on the voltage-dependence and rate of activation. Interacts with IRAG1; regulates HCN4 channel activity. Interacts with IRAG2; regulates HCN4 channel activity. Post-translationally, S-palmitoylated. As to expression, detected in a subset of elongated cells in taste buds.

The protein resides in the cell membrane. The catalysed reaction is K(+)(in) = K(+)(out). The enzyme catalyses Na(+)(in) = Na(+)(out). With respect to regulation, activated by cAMP, and to a lesser extent by cGMP and cCMP. cAMP binding causes a conformation change that leads to the assembly of an active tetramer and channel opening. Binding of cAMP removes a tonic inhibition conferred by cyclic nucleotide-binding domain (CNBD) on channel opening. Cyclic dinucleotides can modulate HCN4 channel; cyclic dinucleotides acting as potent antagonists of cAMP. Inhibited by extracellular Cs(+) ions. Auxiliary subunits can also regulate HCN4 channel. IRAG1 causes a gain-of-function by shifting HCN4 activation to more depolarized membrane potentials in the absence of cAMP. In contrast, IRAG2 causes a loss-of-function by inhibiting cAMP-dependent potentiation of HCN4 activation. Functionally, hyperpolarization-activated ion channel that are permeable to Na(+) and K(+) ions with very slow activation and inactivation. Exhibits higher selectivity for K(+) over Na(+) ions. Contributes to the native pacemaker currents in heart (If) that regulate the rhythm of heart beat. Contributes to the native pacemaker currents in neurons (Ih). May mediate responses to sour stimuli. This is Potassium/sodium hyperpolarization-activated cyclic nucleotide-gated channel 4 (Hcn4) from Mus musculus (Mouse).